Here is a 155-residue protein sequence, read N- to C-terminus: MVKNTEDKPLAQNKKARHDYEIYETFEAGIVLTGTEIKSVRQAKIQLKDGFARVRNGEVWLSNVHIAPFEQGNIFNVEELRTRKLLLNKKEIAKIDKELSGTGITFIPLKVYLKNGFAKVLMGLARGKKDYDKRETLKRKEQNRDIARQIKAYNR.

Belongs to the SmpB family.

It localises to the cytoplasm. Its function is as follows. Required for rescue of stalled ribosomes mediated by trans-translation. Binds to transfer-messenger RNA (tmRNA), required for stable association of tmRNA with ribosomes. tmRNA and SmpB together mimic tRNA shape, replacing the anticodon stem-loop with SmpB. tmRNA is encoded by the ssrA gene; the 2 termini fold to resemble tRNA(Ala) and it encodes a 'tag peptide', a short internal open reading frame. During trans-translation Ala-aminoacylated tmRNA acts like a tRNA, entering the A-site of stalled ribosomes, displacing the stalled mRNA. The ribosome then switches to translate the ORF on the tmRNA; the nascent peptide is terminated with the 'tag peptide' encoded by the tmRNA and targeted for degradation. The ribosome is freed to recommence translation, which seems to be the essential function of trans-translation. This Lactococcus lactis subsp. lactis (strain IL1403) (Streptococcus lactis) protein is SsrA-binding protein.